The following is a 196-amino-acid chain: Peptidyl-tRNA hydrolase (196 aa).

Tyrosine 18 contributes to the tRNA binding site. The active-site Proton acceptor is the histidine 23. TRNA contacts are provided by phenylalanine 69, asparagine 71, and asparagine 117.

It belongs to the PTH family. As to quaternary structure, monomer.

The protein localises to the cytoplasm. The catalysed reaction is an N-acyl-L-alpha-aminoacyl-tRNA + H2O = an N-acyl-L-amino acid + a tRNA + H(+). Hydrolyzes ribosome-free peptidyl-tRNAs (with 1 or more amino acids incorporated), which drop off the ribosome during protein synthesis, or as a result of ribosome stalling. Functionally, catalyzes the release of premature peptidyl moieties from peptidyl-tRNA molecules trapped in stalled 50S ribosomal subunits, and thus maintains levels of free tRNAs and 50S ribosomes. This chain is Peptidyl-tRNA hydrolase, found in Vibrio cholerae serotype O1 (strain ATCC 39315 / El Tor Inaba N16961).